Here is a 29-residue protein sequence, read N- to C-terminus: Cytochrome b6-f complex subunit 8 (29 aa).

The helical transmembrane segment at 3–23 threads the bilayer; that stretch reads IVSIAWAALMVVFSFSLSLVV.

Belongs to the PetN family. In terms of assembly, the 4 large subunits of the cytochrome b6-f complex are cytochrome b6, subunit IV (17 kDa polypeptide, PetD), cytochrome f and the Rieske protein, while the 4 small subunits are PetG, PetL, PetM and PetN. The complex functions as a dimer.

The protein resides in the plastid. It localises to the chloroplast thylakoid membrane. Component of the cytochrome b6-f complex, which mediates electron transfer between photosystem II (PSII) and photosystem I (PSI), cyclic electron flow around PSI, and state transitions. The protein is Cytochrome b6-f complex subunit 8 of Phaseolus vulgaris (Kidney bean).